A 425-amino-acid chain; its full sequence is 3-phosphoshikimate 1-carboxyvinyltransferase (425 aa).

Residues K23, S24, and R28 each coordinate 3-phosphoshikimate. K23 contacts phosphoenolpyruvate. Residues G96 and R124 each coordinate phosphoenolpyruvate. The 3-phosphoshikimate site is built by T170, S171, Q172, S198, D314, and K341. A phosphoenolpyruvate-binding site is contributed by Q172. The Proton acceptor role is filled by D314. Phosphoenolpyruvate is bound by residues R345, R386, and K411.

This sequence belongs to the EPSP synthase family. Monomer.

The protein resides in the cytoplasm. The catalysed reaction is 3-phosphoshikimate + phosphoenolpyruvate = 5-O-(1-carboxyvinyl)-3-phosphoshikimate + phosphate. It participates in metabolic intermediate biosynthesis; chorismate biosynthesis; chorismate from D-erythrose 4-phosphate and phosphoenolpyruvate: step 6/7. In terms of biological role, catalyzes the transfer of the enolpyruvyl moiety of phosphoenolpyruvate (PEP) to the 5-hydroxyl of shikimate-3-phosphate (S3P) to produce enolpyruvyl shikimate-3-phosphate and inorganic phosphate. The polypeptide is 3-phosphoshikimate 1-carboxyvinyltransferase (Nostoc sp. (strain PCC 7120 / SAG 25.82 / UTEX 2576)).